Reading from the N-terminus, the 396-residue chain is Elongation factor Tu (396 aa).

The tr-type G domain maps to 10-206; it reads KPHVNVGTIG…TMDSYIPEPV (197 aa). The segment at 19 to 26 is G1; it reads GHVDHGKT. 19 to 26 is a binding site for GTP; sequence GHVDHGKT. A Mg(2+)-binding site is contributed by T26. Residues 60-64 are G2; sequence GITIS. The G3 stretch occupies residues 81–84; that stretch reads DCPG. GTP-binding positions include 81–85 and 136–139; these read DCPGH and NKAD. A G4 region spans residues 136–139; the sequence is NKAD. The tract at residues 174-176 is G5; the sequence is SAL.

It belongs to the TRAFAC class translation factor GTPase superfamily. Classic translation factor GTPase family. EF-Tu/EF-1A subfamily. In terms of assembly, monomer.

It is found in the cytoplasm. The enzyme catalyses GTP + H2O = GDP + phosphate + H(+). Functionally, GTP hydrolase that promotes the GTP-dependent binding of aminoacyl-tRNA to the A-site of ribosomes during protein biosynthesis. In Legionella pneumophila (strain Paris), this protein is Elongation factor Tu.